Here is a 606-residue protein sequence, read N- to C-terminus: Membrane protein insertase YidC (606 aa).

The helical transmembrane segment at 8–28 (LILATALSFLVILVWFLLFPP) threads the bilayer. Low complexity predominate over residues 59–78 (TEAAPGAAPQTAATPTENAP). Residues 59 to 79 (TEAAPGAAPQTAATPTENAPR) form a disordered region. 4 consecutive transmembrane segments (helical) span residues 378 to 398 (MGVA…PLAW), 448 to 468 (LPIL…FVTI), 506 to 526 (SILA…SMWL), and 542 to 562 (IFAW…SGLI).

The protein belongs to the OXA1/ALB3/YidC family. Type 1 subfamily. Interacts with the Sec translocase complex via SecD. Specifically interacts with transmembrane segments of nascent integral membrane proteins during membrane integration.

The protein localises to the cell inner membrane. In terms of biological role, required for the insertion and/or proper folding and/or complex formation of integral membrane proteins into the membrane. Involved in integration of membrane proteins that insert both dependently and independently of the Sec translocase complex, as well as at least some lipoproteins. Aids folding of multispanning membrane proteins. The sequence is that of Membrane protein insertase YidC from Dinoroseobacter shibae (strain DSM 16493 / NCIMB 14021 / DFL 12).